Here is a 62-residue protein sequence, read N- to C-terminus: MKSTLMTASLLILVLLSIVDYASVYAELIDSEISMERQWINACFNICMKISSDQKYCKSFCG.

A signal peptide spans 1-26 (MKSTLMTASLLILVLLSIVDYASVYA). Residues 27–36 (ELIDSEISME) constitute a propeptide that is removed on maturation. Cystine bridges form between Cys43/Cys61 and Cys47/Cys57.

It belongs to the short scorpion toxin superfamily. Potassium channel inhibitor kappa-KTx family. Kappa-KTx 3 subfamily. Expressed by the venom gland.

The protein localises to the secreted. Functionally, potassium channel inhibitor (Kv). This chain is Potassium channel toxin kappa-KTx 3.3, found in Heterometrus petersii (Asian forest scorpion).